A 564-amino-acid polypeptide reads, in one-letter code: Hexose transporter HXT13 (564 aa).

Topologically, residues 1–52 (MSSAQSSIDSDGDVRDADIHVAPPVEKEWSDGFDDNEVINGDNVEPPKRGLI) are cytoplasmic. A helical transmembrane segment spans residues 53–73 (GYLVIYLLCYPISFGGFLPGW). At 74–109 (DSGITAGFINMDNFKMNFGSYKHSTGEYYLSNVRMG) the chain is on the extracellular side. A helical transmembrane segment spans residues 110 to 130 (LLVAMFSIGCAIGGLIFARLA). Topologically, residues 131 to 136 (DTLGRR) are cytoplasmic. A helical membrane pass occupies residues 137–157 (LAIVIVVLVYMVGAIIQISSN). Topologically, residues 158–167 (HKWYQYFVGK) are extracellular. A helical transmembrane segment spans residues 168-188 (IIYGLGAGGCSVLCPMLLSEI). The Cytoplasmic portion of the chain corresponds to 189–194 (APTDLR). The helical transmembrane segment at 195–215 (GGLVSLYQLNMTFGIFLGYCS) threads the bilayer. The Extracellular portion of the chain corresponds to 216–229 (VYGTRKYDNTAQWR). The chain crosses the membrane as a helical span at residues 230 to 250 (VPLGLCFLWALIIIIGMLLVP). Topologically, residues 251-333 (ESPRYLIECE…VQTFLQLTGE (83 aa)) are cytoplasmic. A helical membrane pass occupies residues 334 to 350 (NYFFFYGTTIFKSVGLT). Residues 351–356 (DGFETS) are Extracellular-facing. Residues 357-374 (IVLGTVNFFSTIIAVMVV) traverse the membrane as a helical segment. Over 375 to 381 (DKIGRRK) the chain is Cytoplasmic. Residues 382–402 (CLLFGAAGMMACMVIFASIGV) traverse the membrane as a helical segment. At 403 to 424 (KCLYPHGQDGPSSKGAGNAMIV) the chain is on the extracellular side. A helical transmembrane segment spans residues 425–445 (FTCFYIFCFATTWAPVAYIVV). Residues 446 to 462 (AESFPSKVKSRAMSIST) are Cytoplasmic-facing. The helical transmembrane segment at 463–483 (ACNWLWQFLIGFFTPFITGSI) threads the bilayer. A topological domain (extracellular) is located at residue His-484. A helical transmembrane segment spans residues 485 to 505 (FYYGYVFVGCLVAMFLYVFFF). At 506–564 (LPETIGLSLEEIQLLYEEGIKPWKSASWVPPSRRGISSEESKTEKKDWKKFLKFSKNSD) the chain is on the cytoplasmic side. The disordered stretch occupies residues 530–551 (SASWVPPSRRGISSEESKTEKK). The span at 541-551 (ISSEESKTEKK) shows a compositional bias: basic and acidic residues.

It belongs to the major facilitator superfamily. Sugar transporter (TC 2.A.1.1) family.

It localises to the membrane. In terms of biological role, probable glucose transporter. In Saccharomyces cerevisiae (strain ATCC 204508 / S288c) (Baker's yeast), this protein is Hexose transporter HXT13 (HXT13).